We begin with the raw amino-acid sequence, 619 residues long: Long-chain fatty acid transport protein 6 (619 aa).

The next 2 membrane-spanning stretches (helical) occupy residues 22–42 (LLFP…LIII) and 119–139 (VHVW…NTNI). AMP is bound at residue 221–232 (YIFTSGTTGLPK).

Belongs to the ATP-dependent AMP-binding enzyme family. As to expression, strongly expressed in heart and localizes to cardiac myocytes. Expressed at moderate levels in placenta, testis, and adrenal glands. Expressed at very low levels in kidney, bladder and uterus.

It localises to the cell membrane. It is found in the sarcolemma. The enzyme catalyses a fatty acid(in) = a fatty acid(out). It catalyses the reaction hexadecanoate(out) = hexadecanoate(in). It carries out the reaction (9Z)-octadecenoate(out) = (9Z)-octadecenoate(in). The catalysed reaction is (9Z,12Z)-octadecadienoate(out) = (9Z,12Z)-octadecadienoate(in). The enzyme catalyses a very long-chain fatty acid + ATP + CoA = a very long-chain fatty acyl-CoA + AMP + diphosphate. It catalyses the reaction tetracosanoate + ATP + CoA = tetracosanoyl-CoA + AMP + diphosphate. It carries out the reaction a long-chain fatty acid + ATP + CoA = a long-chain fatty acyl-CoA + AMP + diphosphate. The catalysed reaction is (5Z,8Z,11Z,14Z)-eicosatetraenoate + ATP + CoA = (5Z,8Z,11Z,14Z)-eicosatetraenoyl-CoA + AMP + diphosphate. The enzyme catalyses (9Z)-octadecenoate + ATP + CoA = (9Z)-octadecenoyl-CoA + AMP + diphosphate. Mediates the import of long-chain fatty acids (LCFA) into the cell by facilitating their transport at the plasma membrane. Also functions as an acyl-CoA ligase catalyzing the ATP-dependent formation of fatty acyl-CoA using LCFA and very-long-chain fatty acids (VLCFA) as substrates. Plays a pivotal role in regulating available LCFA substrates from exogenous sources in tissues undergoing high levels of beta-oxidation such as the heart. The polypeptide is Long-chain fatty acid transport protein 6 (SLC27A6) (Homo sapiens (Human)).